We begin with the raw amino-acid sequence, 198 residues long: MAPACLLAPLLLLLLGGFPLVPGESIRETEVIDPQDLLEGRYFSGALPDDEDAGGSDDFELSGSGDLDDTEEPRPFPEVIEPLVPLDNHIPENAQPGIRVPSEPKELEENEVIPKRAPSDVGDDMSNKVSMSSTAQGSNIFERTEVLAALIVGGVVGILFAVFLILLLVYRMKKKDEGSYDLGKKPIYKKAPTNEFYA.

Positions 1-23 are cleaved as a signal peptide; sequence MAPACLLAPLLLLLLGGFPLVPG. Residues 24–145 lie on the Extracellular side of the membrane; the sequence is ESIRETEVID…QGSNIFERTE (122 aa). Disordered stretches follow at residues 42-76 and 94-130; these read YFSG…PRPF and AQPG…NKVS. Ser44, Ser62, and Ser64 each carry an O-linked (Xyl...) (glycosaminoglycan) serine glycan. The segment covering 48 to 71 has biased composition (acidic residues); it reads PDDEDAGGSDDFELSGSGDLDDTE. A compositionally biased stretch (basic and acidic residues) spans 102 to 118; the sequence is SEPKELEENEVIPKRAP. The chain crosses the membrane as a helical span at residues 146 to 170; sequence VLAALIVGGVVGILFAVFLILLLVY. Residues 171–198 are Cytoplasmic-facing; that stretch reads RMKKKDEGSYDLGKKPIYKKAPTNEFYA.

Belongs to the syndecan proteoglycan family. In terms of assembly, homodimer. Interacts with CDCP1 and SDCBP. Interacts (via its cytoplasmic domain) with GIPC (via its PDZ domain). Interacts (via its cytoplasmic domain) with NUDT16L1. Interacts with DNM2; this interaction is markedly enhanced at focal ahesion site upon induction of focal adhesions and stress-fiber formation. Post-translationally, shedding is enhanced by a number of factors such as heparanase, thrombin or EGF. Also by stress and wound healing. PMA-mediated shedding is inhibited by TIMP3. In terms of processing, O-glycosylated; contains both chondroitin sulfate and heparan sulfate. Ser-44, Ser-62 and Ser-64 can all be modified by either chondroitin sulfate or heparan sulfate, and the protein exists in forms that contain only chondroitin sulfate, only heparan sulfate and both chondroitin sulfate and heparan sulfate. In terms of tissue distribution, ubiquitous. Highest levels in liver, kidney and lung.

The protein localises to the membrane. It is found in the secreted. Cell surface proteoglycan which regulates exosome biogenesis in concert with SDCBP and PDCD6IP. The polypeptide is Syndecan-4 (Mus musculus (Mouse)).